A 215-amino-acid polypeptide reads, in one-letter code: 3-isopropylmalate dehydratase small subunit (215 aa).

The protein belongs to the LeuD family. LeuD type 1 subfamily. In terms of assembly, heterodimer of LeuC and LeuD.

The catalysed reaction is (2R,3S)-3-isopropylmalate = (2S)-2-isopropylmalate. The protein operates within amino-acid biosynthesis; L-leucine biosynthesis; L-leucine from 3-methyl-2-oxobutanoate: step 2/4. Its function is as follows. Catalyzes the isomerization between 2-isopropylmalate and 3-isopropylmalate, via the formation of 2-isopropylmaleate. The polypeptide is 3-isopropylmalate dehydratase small subunit (Ectopseudomonas mendocina (strain ymp) (Pseudomonas mendocina)).